A 178-amino-acid polypeptide reads, in one-letter code: Inorganic pyrophosphatase (178 aa).

3 residues coordinate substrate: Lys30, Arg44, and Tyr56. Positions 66, 71, and 103 each coordinate Mg(2+). Substrate is bound at residue Tyr140.

The protein belongs to the PPase family. As to quaternary structure, homohexamer. Mg(2+) is required as a cofactor.

The protein resides in the cytoplasm. It catalyses the reaction diphosphate + H2O = 2 phosphate + H(+). Functionally, catalyzes the hydrolysis of inorganic pyrophosphate (PPi) forming two phosphate ions. The protein is Inorganic pyrophosphatase of Pyrococcus horikoshii (strain ATCC 700860 / DSM 12428 / JCM 9974 / NBRC 100139 / OT-3).